A 153-amino-acid polypeptide reads, in one-letter code: Transcriptional repressor NrdR (153 aa).

The segment at 3–34 (CPSCHHSGTRVLESRPVEEGRSIRRRRECEQC) is a zinc-finger region. One can recognise an ATP-cone domain in the interval 49 to 139 (LIVVKKEGTR…VYRQFKDINV (91 aa)).

This sequence belongs to the NrdR family. Requires Zn(2+) as cofactor.

In terms of biological role, negatively regulates transcription of bacterial ribonucleotide reductase nrd genes and operons by binding to NrdR-boxes. The protein is Transcriptional repressor NrdR of Geobacillus kaustophilus (strain HTA426).